A 293-amino-acid chain; its full sequence is Nucleotide-binding protein OB2468 (293 aa).

Position 14-21 (14-21 (GMSGAGKT)) interacts with ATP. A GTP-binding site is contributed by 65 to 68 (DLRG).

This sequence belongs to the RapZ-like family.

In terms of biological role, displays ATPase and GTPase activities. This is Nucleotide-binding protein OB2468 from Oceanobacillus iheyensis (strain DSM 14371 / CIP 107618 / JCM 11309 / KCTC 3954 / HTE831).